We begin with the raw amino-acid sequence, 763 residues long: ATP-dependent RNA helicase MAK5 (763 aa).

2 disordered regions span residues 1–35 (MVNK…SNNN) and 87–169 (DTKI…DNEV). Positions 18–35 (FKGSSSKGNSKTVKSNNN) are enriched in low complexity. The segment covering 104 to 114 (EIDEDAPENDL) has biased composition (acidic residues). A compositionally biased stretch (basic and acidic residues) spans 115-127 (VEFKNMDDMKDGE). The segment covering 136-160 (SEAEAESEAESEEEEEKTGDDEGED) has biased composition (acidic residues). The Q motif signature appears at 192–220 (WTEKVGELSFTTLHGLTKLGFNKPTLIQE). In terms of domain architecture, Helicase ATP-binding spans 223 to 411 (IPMALKGEDI…SHASWKNMKT (189 aa)). 236-243 (ASTGSGKT) contributes to the ATP binding site. The short motif at 352–355 (DEAD) is the DEAD box element. Residues 450–619 (QIKESLIECA…DIIMGKKKWQ (170 aa)) form the Helicase C-terminal domain.

Belongs to the DEAD box helicase family. DDX24/MAK5 subfamily.

It localises to the nucleus. The protein localises to the nucleolus. The catalysed reaction is ATP + H2O = ADP + phosphate + H(+). Its function is as follows. ATP-binding RNA helicase involved in the biogenesis of 60S ribosomal subunits and is required for the normal formation of 25S and 5.8S rRNAs. The sequence is that of ATP-dependent RNA helicase MAK5 (MAK5) from Vanderwaltozyma polyspora (strain ATCC 22028 / DSM 70294 / BCRC 21397 / CBS 2163 / NBRC 10782 / NRRL Y-8283 / UCD 57-17) (Kluyveromyces polysporus).